Reading from the N-terminus, the 405-residue chain is CMP-sialic acid transporter 5 (405 aa).

Residues 1–43 (MQRNGVVECSVCRSRLVVPSPRSVSRAYDKHRSKISSKFRALN) are Cytoplasmic-facing. The helical transmembrane segment at 44–64 (VLLVVGDCILVGLQPILVFMS) threads the bilayer. Topologically, residues 65–74 (KVDGKFQFSP) are lumenal. A helical transmembrane segment spans residues 75-95 (ISVNFLTEVTKVVFAIVMLII). The Cytoplasmic portion of the chain corresponds to 96 to 121 (QSRKQKVGEKPLLARSTFIQAARNNA). The helical transmembrane segment at 122–142 (LLAVPALLYAINNYLKFIMQL) threads the bilayer. The Lumenal segment spans residues 143–147 (YFNPS). A helical transmembrane segment spans residues 148–168 (TVKMLSNLKVLVIAVLLKFIM). At 169–171 (KRR) the chain is on the cytoplasmic side. Residues 172–192 (FSVIQWEALALLLIGISINQL) form a helical membrane-spanning segment. At 193-200 (RTVPAGNT) the chain is on the lumenal side. A helical transmembrane segment spans residues 201–221 (AFGLPVTAIAYIYTLIFVTVP). Residues 222–244 (SLASVYNEYALKSQYDTSIYLQN) are Cytoplasmic-facing. Residues 245-265 (LFLYGYGAIFNFLGILGTALF) traverse the membrane as a helical segment. The Lumenal portion of the chain corresponds to 266–281 (QGPESFNILRGHSRAT). The chain crosses the membrane as a helical span at residues 282 to 302 (MFLICNNAAQGILSSFFFKYA). At 303-322 (DTILKKYSSTVATIFTGLAS) the chain is on the cytoplasmic side. A helical transmembrane segment spans residues 323–343 (AAFLGHTLTINFLLGISVVFI). At 344–405 (SMHQFFSPLA…TDERQPLLPT (62 aa)) the chain is on the lumenal side. The interval 368–405 (DTQNHRSSESSFVNMTAGAAEDASHRIGTDERQPLLPT) is disordered. Over residues 389–405 (DASHRIGTDERQPLLPT) the composition is skewed to basic and acidic residues.

This sequence belongs to the nucleotide-sugar transporter family. CMP-Sialate:CMP antiporter (TC 2.A.7.12) subfamily.

Its subcellular location is the golgi apparatus membrane. Functionally, sugar transporter involved in the transport of CMP-sialic acid from the cytoplasm into the Golgi. May transport important nucleotide sugars such as CMP-Kdo (2-keto-3-deoxy-D-manno-octulosonic acid) in physiological conditions. The polypeptide is CMP-sialic acid transporter 5 (Oryza sativa subsp. japonica (Rice)).